Consider the following 324-residue polypeptide: Carbamate kinase (324 aa).

This sequence belongs to the carbamate kinase family.

The protein resides in the cytoplasm. The enzyme catalyses hydrogencarbonate + NH4(+) + ATP = carbamoyl phosphate + ADP + H2O + H(+). The protein operates within amino-acid degradation; L-arginine degradation via ADI pathway. This chain is Carbamate kinase, found in Rhizobium meliloti (strain 1021) (Ensifer meliloti).